The following is a 625-amino-acid chain: ATP-binding cassette sub-family F member 2 (625 aa).

The segment at 1 to 54 (MPSDLAKKKAAKKKEAAKARQRPRKGHEENGDAITEPQVAEERNEEANGRETTE) is disordered. A compositionally biased stretch (basic and acidic residues) spans 40 to 54 (AEERNEEANGRETTE). 2 ABC transporter domains span residues 88–327 (AHII…ENQM) and 398–615 (IMVQ…VGEE). 120–127 (GLNGIGKS) provides a ligand contact to ATP. Phosphothreonine is present on T220. An N6-acetyllysine modification is found at K306. An ATP-binding site is contributed by 432-439 (GPNGAGKS). Residue S514 is modified to Phosphoserine.

This sequence belongs to the ABC transporter superfamily. ABCF family. EF3 subfamily.

The polypeptide is ATP-binding cassette sub-family F member 2 (ABCF2) (Bos taurus (Bovine)).